A 142-amino-acid polypeptide reads, in one-letter code: Succinate dehydrogenase subunit 6, mitochondrial (142 aa).

In terms of assembly, component of complex II composed of eight subunits in plants: four classical SDH subunits SDH1, SDH2, SDH3 and SDH4 (a flavoprotein (FP), an iron-sulfur protein (IP), and a cytochrome b composed of a large and a small subunit.), as well as four subunits unknown in mitochondria from bacteria and heterotrophic eukaryotes.

It is found in the mitochondrion inner membrane. The protein operates within carbohydrate metabolism; tricarboxylic acid cycle. The polypeptide is Succinate dehydrogenase subunit 6, mitochondrial (Oryza sativa subsp. japonica (Rice)).